Consider the following 285-residue polypeptide: Nucleotide-binding protein Avin_12760 (285 aa).

Position 8-15 (8-15 (GRSGSGKS)) interacts with ATP. 60–63 (DARN) contacts GTP.

It belongs to the RapZ-like family.

Functionally, displays ATPase and GTPase activities. The chain is Nucleotide-binding protein Avin_12760 from Azotobacter vinelandii (strain DJ / ATCC BAA-1303).